The sequence spans 315 residues: Ribose-phosphate pyrophosphokinase (315 aa).

ATP is bound by residues 41–43 (DGE) and 100–101 (RQ). Mg(2+) contacts are provided by His-134 and Asp-173. Lys-196 is a catalytic residue. D-ribose 5-phosphate is bound by residues Arg-198, Asp-222, and 226 to 230 (DTAGT).

This sequence belongs to the ribose-phosphate pyrophosphokinase family. Class I subfamily. Homohexamer. It depends on Mg(2+) as a cofactor.

It localises to the cytoplasm. It carries out the reaction D-ribose 5-phosphate + ATP = 5-phospho-alpha-D-ribose 1-diphosphate + AMP + H(+). It participates in metabolic intermediate biosynthesis; 5-phospho-alpha-D-ribose 1-diphosphate biosynthesis; 5-phospho-alpha-D-ribose 1-diphosphate from D-ribose 5-phosphate (route I): step 1/1. Functionally, involved in the biosynthesis of the central metabolite phospho-alpha-D-ribosyl-1-pyrophosphate (PRPP) via the transfer of pyrophosphoryl group from ATP to 1-hydroxyl of ribose-5-phosphate (Rib-5-P). The protein is Ribose-phosphate pyrophosphokinase of Bacillus caldolyticus.